Reading from the N-terminus, the 239-residue chain is Large ribosomal subunit protein uL30 (239 aa).

Residues 1 to 37 (MSKFVPENVQKKLARDEKLRKAKAEQRKASSAQMKQR) are disordered. Over residues 9-28 (VQKKLARDEKLRKAKAEQRK) the composition is skewed to basic and acidic residues.

The protein belongs to the universal ribosomal protein uL30 family.

This chain is Large ribosomal subunit protein uL30 (RPL7), found in Tetrahymena thermophila.